Here is a 622-residue protein sequence, read N- to C-terminus: MLPRRLLLVGEGNFSFAASLIDGLDPSVSVTATGFQHRAALEGDPVALENLKRLRERGVEVRFGVDCTQLSHALPADDRDFDRIYFNFPHCGRKAGVAKNRELLAKFFQSCADVLAKAGEVHVTLCRGQGGTPADKPQREWHNSWQVVAMAALGGFILSDVCPFSCEAVPGYKCTGYRSQDRPFHIEGALTYIFTQSLPFESCQPRTFRVRLEDRWFYFTEPEALPGKLNRRFLEASSCHPIRTINEKLIAELGKTFPLKRLKCPLPLLSRGGPSVFLPATCDLLPTFWIRLHEDNSCSEFQNGEITQEMEEIPVSVSECTLPESPVRDGCKGAQEGICGRVKLGLRPSLLVHVEAVIHSPDFLPASLHVLSGPVFRKCHILPFMMPAFHETLFILGFDNNMKESCLPSLLGHLKDALGNLLTQTLQEGSSLGTSVEFVLQPNGKDYIIHVKSLNFGPDCAENLIIGSILTSKIVKHKHQCFVFVSINLDLLVMLAYGISDWRILWTFDNRFLKRFAPGKIEHFKSYSLYPPCYVHDVSFWVDEKKAFDELEFHTVARAVSQDTVVSVQYRDRFQHPETRQVSLCYRLTYQTCDKALTPQLAAAMQSQFRKEIQRQLHVSPR.

The 94-residue stretch at 529–622 (LYPPCYVHDV…IQRQLHVSPR (94 aa)) folds into the FDX-ACB domain.

In Mus musculus (Mouse), this protein is Ferredoxin-fold anticodon-binding domain-containing protein 1 homolog (Fdxacb1).